The sequence spans 539 residues: Chloride channel CLIC-like protein 1 (539 aa).

Positions 1-18 (MLCRLLLCECLLLITGYA) are cleaved as a signal peptide. Topologically, residues 19 to 184 (HDDDWIDPTD…EDYFGVDPYN (166 aa)) are lumenal. A disordered region spans residues 41-61 (KSQVRSGTSEKKEVSPDSSEA). A helical membrane pass occupies residues 185–205 (VFMVLLCLLCLVVLVATELWT). Residues 206–215 (YVRWYTQMKR) lie on the Cytoplasmic side of the membrane. The chain crosses the membrane as a helical span at residues 216 to 236 (IFIISFLLSLAWNWIYLYKMA). Topologically, residues 237–329 (FAQHQANIAG…GEFIKALMKE (93 aa)) are lumenal. The helical transmembrane segment at 330–350 (IPVLLQIPVLAILALAVLSFC) threads the bilayer. The Cytoplasmic segment spans residues 351–539 (YGAGRSVPML…GTEPVSSPCG (189 aa)). A disordered region spans residues 361–410 (RHFGGPDREPPRALEPDDRRRQKGLDYRLHGGAGDADFSYRGPAGSIEQG). Positions 364-389 (GGPDREPPRALEPDDRRRQKGLDYRL) are enriched in basic and acidic residues. Phosphoserine occurs at positions 429, 433, and 459. The interval 444–539 (DTEAQEHPEV…GTEPVSSPCG (96 aa)) is disordered. The segment covering 475–485 (STPTEYSQSAK) has biased composition (polar residues). T476 carries the post-translational modification Phosphothreonine. Residues S498, S513, and S521 each carry the phosphoserine modification. Over residues 512-521 (CSPPGGCPPS) the composition is skewed to low complexity.

The protein belongs to the chloride channel MCLC family. As to quaternary structure, homomultimers. Interacts with mitochondrial protein PIGBOS1 (via C-terminus); the interaction occurs at the mitochondria-associated endoplasmic reticulum (ER) membrane, a zone of contact between the ER and mitochondrial membranes, but does not appear to play a role in ER-mitochondria tethering and is not affected by ER stress. Interacts with CALR. Expressed in cerebellum (at protein level).

Its subcellular location is the endoplasmic reticulum membrane. The catalysed reaction is chloride(in) = chloride(out). The enzyme catalyses bromide(in) = bromide(out). It carries out the reaction nitrate(in) = nitrate(out). It catalyses the reaction fluoride(in) = fluoride(out). Its activity is regulated as follows. Activated by membrane phosphatidylinositol 4,5-bisphosphate (PI(4,5)P2, PIP2). Inhibited by lumenal Ca(2+). Functionally, anion-selective channel with Ca(2+)-dependent and voltage-independent gating. Permeable to small monovalent anions with selectivity for bromide &gt; chloride &gt; nitrate &gt; fluoride. Operates in the endoplasmic reticulum (ER) membrane where it mediates chloride efflux to compensate for the loss of positive charges from the ER lumen upon Ca(2+) release. Contributes to the maintenance of ER Ca(2+) pools and activation of unfolded protein response to prevent accumulation of misfolded proteins in the ER lumen. Particularly involved in ER homeostasis mechanisms underlying motor neurons and retinal photoreceptors survival. This is Chloride channel CLIC-like protein 1 from Mus musculus (Mouse).